The chain runs to 490 residues: Betaine aldehyde dehydrogenase (490 aa).

Residues threonine 26, isoleucine 27, and aspartate 93 each coordinate K(+). Position 150–152 (150–152 (GAW)) interacts with NAD(+). Residue lysine 162 is the Charge relay system of the active site. 176–179 (KPSE) is a binding site for NAD(+). K(+) is bound at residue valine 180. An NAD(+)-binding site is contributed by 230–233 (GVAS). Leucine 246 serves as a coordination point for K(+). Glutamate 252 serves as the catalytic Proton acceptor. Glycine 254, cysteine 286, and glutamate 387 together coordinate NAD(+). Cysteine 286 (nucleophile) is an active-site residue. Cysteine 286 is modified (cysteine sulfenic acid (-SOH)). The K(+) site is built by lysine 457 and glycine 460. The Charge relay system role is filled by glutamate 464.

It belongs to the aldehyde dehydrogenase family. Dimer of dimers. K(+) is required as a cofactor.

It catalyses the reaction betaine aldehyde + NAD(+) + H2O = glycine betaine + NADH + 2 H(+). Its pathway is amine and polyamine biosynthesis; betaine biosynthesis via choline pathway; betaine from betaine aldehyde: step 1/1. Its function is as follows. Involved in the biosynthesis of the osmoprotectant glycine betaine. Catalyzes the irreversible oxidation of betaine aldehyde to the corresponding acid. The chain is Betaine aldehyde dehydrogenase from Escherichia coli (strain SMS-3-5 / SECEC).